We begin with the raw amino-acid sequence, 784 residues long: ATP-dependent 6-phosphofructokinase, platelet type (784 aa).

Methionine 1 carries the N-acetylmethionine modification. An N-terminal catalytic PFK domain 1 region spans residues 1–399 (MDADDSRAPK…NLNTYKRLAI (399 aa)). Residues serine 6, serine 12, and serine 21 each carry the phosphoserine modification. ATP is bound by residues glycine 34, 97-98 (RC), and 127-130 (GDGS). Aspartate 128 serves as a coordination point for Mg(2+). Serine 142 bears the Phosphoserine mark. Substrate-binding positions include 173–175 (SID), arginine 210, 217–219 (MGR), glutamate 273, arginine 301, and 307–310 (HVQR). Residue aspartate 175 is the Proton acceptor of the active site. Serine 386 is modified (phosphoserine). Position 395 is an N6-acetyllysine (lysine 395). Residues 400–411 (KLPDDQIPKTNC) form an interdomain linker region. The C-terminal regulatory PFK domain 2 stretch occupies residues 412–784 (NVAVINVGAP…QLEHVQPWSV (373 aa)). Arginine 481 contacts beta-D-fructose 2,6-bisphosphate. Lysine 486 is modified (N6-acetyllysine). Beta-D-fructose 2,6-bisphosphate-binding positions include 538–542 (TVSNN), arginine 576, 583–585 (MGG), and glutamate 639. O-linked (GlcNAc) serine glycosylation is present at serine 540. Tyrosine 651 carries the post-translational modification Phosphotyrosine. Beta-D-fructose 2,6-bisphosphate is bound by residues arginine 665 and 671–674 (HMQQ). Position 688 is an N6-acetyllysine (lysine 688). Arginine 744 lines the beta-D-fructose 2,6-bisphosphate pocket. The residue at position 783 (serine 783) is a Phosphoserine.

This sequence belongs to the phosphofructokinase type A (PFKA) family. ATP-dependent PFK group I subfamily. Eukaryotic two domain clade 'E' sub-subfamily. As to quaternary structure, homo- and heterotetramers. Phosphofructokinase (PFK) enzyme functions as a tetramer composed of different combinations of 3 types of subunits, called PFKM (where M stands for Muscle), PFKL (Liver) and PFKP (Platelet). The composition of the PFK tetramer differs according to the tissue type it is present in. In muscles, it is composed of 4 PFKM subunits (also called M4). In the liver, the predominant form is a tetramer of PFKL subunits (L4). In erythrocytes, both PFKM and PFKL subunits randomly tetramerize to form M4, L4 and other combinations (ML3, M2L2, M3L). In platelets, brain and fibroblasts, PFK contains a higher proportion of PFKP subunits. The kinetic and regulatory properties of the tetrameric enzyme are dependent on the subunit composition, hence can vary across tissues. Interacts with ATG4B; promoting phosphorylation of ATG4B. The cofactor is Mg(2+). In terms of processing, phosphorylation at Ser-386 promotes interaction with ATG4B. GlcNAcylation decreases enzyme activity.

It localises to the cytoplasm. It carries out the reaction beta-D-fructose 6-phosphate + ATP = beta-D-fructose 1,6-bisphosphate + ADP + H(+). Its pathway is carbohydrate degradation; glycolysis; D-glyceraldehyde 3-phosphate and glycerone phosphate from D-glucose: step 3/4. Its activity is regulated as follows. Allosterically activated by ADP, AMP, or fructose 2,6-bisphosphate, and allosterically inhibited by ATP or citrate. Catalyzes the phosphorylation of D-fructose 6-phosphate to fructose 1,6-bisphosphate by ATP, the first committing step of glycolysis. The polypeptide is ATP-dependent 6-phosphofructokinase, platelet type (PFKP) (Homo sapiens (Human)).